Here is a 660-residue protein sequence, read N- to C-terminus: UvrABC system protein B (660 aa).

The Helicase ATP-binding domain occupies 26 to 196; that stretch reads DGIDEKKEHQ…ELNKGQFDVK (171 aa). Residue 39–46 participates in ATP binding; the sequence is GVTGSGKT. The short motif at 92 to 115 is the Beta-hairpin element; that stretch reads YFDFYKPEAYIPKSDLYIEKTSKN. Residues 431 to 593 enclose the Helicase C-terminal domain; the sequence is QIEDIYDHLK…IIPKTIVKPI (163 aa). In terms of domain architecture, UVR spans 622-657; the sequence is KKFIDQMVRKMTQLAKANKFEEAIEIRDYLIEIGIE.

Belongs to the UvrB family. Forms a heterotetramer with UvrA during the search for lesions. Interacts with UvrC in an incision complex.

It is found in the cytoplasm. The UvrABC repair system catalyzes the recognition and processing of DNA lesions. A damage recognition complex composed of 2 UvrA and 2 UvrB subunits scans DNA for abnormalities. Upon binding of the UvrA(2)B(2) complex to a putative damaged site, the DNA wraps around one UvrB monomer. DNA wrap is dependent on ATP binding by UvrB and probably causes local melting of the DNA helix, facilitating insertion of UvrB beta-hairpin between the DNA strands. Then UvrB probes one DNA strand for the presence of a lesion. If a lesion is found the UvrA subunits dissociate and the UvrB-DNA preincision complex is formed. This complex is subsequently bound by UvrC and the second UvrB is released. If no lesion is found, the DNA wraps around the other UvrB subunit that will check the other stand for damage. This is UvrABC system protein B from Metamycoplasma arthritidis (strain 158L3-1) (Mycoplasma arthritidis).